Reading from the N-terminus, the 119-residue chain is Chorion class CA protein ERA.3 (119 aa).

A signal peptide spans 1 to 21; that stretch reads MSYFVVFAICIQACLFHNVYS. Residues 22–55 form a left arm region; the sequence is QCLGRVGPGGPPLGPYGGPLGGPGYGPVGYGGCG. The interval 56–103 is central domain; sequence GYGGSGIGNVAVAGELPVVGSSAVMGQVPVIGAVEFAGPACAVGSVSI. Residues 104 to 119 form a right arm region; sequence SGACGPTCGCGGLPYY.

The protein belongs to the chorion protein family.

In terms of biological role, this protein is one of many from the eggshell of the silk moth. The protein is Chorion class CA protein ERA.3 (ERA.3) of Bombyx mori (Silk moth).